The chain runs to 554 residues: Phenylalanine--tRNA ligase beta subunit (554 aa).

Residues 276–351 (LTLKSRIISI…INYGYEKFEG (76 aa)) form the B5 domain. Mg(2+) contacts are provided by D329, D335, E338, and E339.

This sequence belongs to the phenylalanyl-tRNA synthetase beta subunit family. Type 2 subfamily. As to quaternary structure, tetramer of two alpha and two beta subunits. Mg(2+) serves as cofactor.

Its subcellular location is the cytoplasm. It carries out the reaction tRNA(Phe) + L-phenylalanine + ATP = L-phenylalanyl-tRNA(Phe) + AMP + diphosphate + H(+). The polypeptide is Phenylalanine--tRNA ligase beta subunit (Methanococcus maripaludis (strain C7 / ATCC BAA-1331)).